Consider the following 78-residue polypeptide: Defensin-like protein 171 (78 aa).

The signal sequence occupies residues 1-23; sequence MAKTASSLVLPIIFLVMFALVEQ. 4 disulfides stabilise this stretch: C27-C71, C34-C56, C40-C65, and C44-C67.

Belongs to the DEFL family.

Its subcellular location is the secreted. This is Defensin-like protein 171 (LCR61) from Arabidopsis thaliana (Mouse-ear cress).